Here is a 325-residue protein sequence, read N- to C-terminus: Tetraacyldisaccharide 4'-kinase (325 aa).

58–65 contacts ATP; the sequence is TVGGSGKT.

The protein belongs to the LpxK family.

It catalyses the reaction a lipid A disaccharide + ATP = a lipid IVA + ADP + H(+). Its pathway is glycolipid biosynthesis; lipid IV(A) biosynthesis; lipid IV(A) from (3R)-3-hydroxytetradecanoyl-[acyl-carrier-protein] and UDP-N-acetyl-alpha-D-glucosamine: step 6/6. In terms of biological role, transfers the gamma-phosphate of ATP to the 4'-position of a tetraacyldisaccharide 1-phosphate intermediate (termed DS-1-P) to form tetraacyldisaccharide 1,4'-bis-phosphate (lipid IVA). This Coxiella burnetii (strain CbuK_Q154) (Coxiella burnetii (strain Q154)) protein is Tetraacyldisaccharide 4'-kinase.